A 215-amino-acid chain; its full sequence is Probable phosphoglycerate mutase GpmB (215 aa).

Substrate contacts are provided by residues 8 to 15, 21 to 22, Arg58, 82 to 85, and 151 to 152; these read RHGETEWN, QG, ELDM, and GI. His9 serves as the catalytic Tele-phosphohistidine intermediate. Glu82 (proton donor/acceptor) is an active-site residue.

The protein belongs to the phosphoglycerate mutase family. GpmB subfamily.

It catalyses the reaction (2R)-2-phosphoglycerate = (2R)-3-phosphoglycerate. The protein operates within carbohydrate degradation; glycolysis; pyruvate from D-glyceraldehyde 3-phosphate: step 3/5. The chain is Probable phosphoglycerate mutase GpmB from Proteus mirabilis (strain HI4320).